We begin with the raw amino-acid sequence, 425 residues long: MLDIKWIREHPEKLDEALAKRGIEPQAERLIKLDLERRSHVAKVQSAQERRNTASKKIGQALAVCDQKMAERFRAEVEEIKVFLSSATAEEKRLTESLENALSALPNIPLDDVPEGKDESDNVVLRHFSVPTTFDFTPKEHFDLGQNLKQMDFERASRLSGTRFTVLSGALARLERALGQFMLDVHVYEHGYTEVSVPLLVRDESVYGAAQLPKFADDLFRTTDGRWLISTAEVPLTNLVNNEILEISDLPLRFSSLTPCFRSEAGSAGRDTRGMLRQHQFWKVEMVSITTAEQSLIELERMTECAEDVLKRLDLPFRTMVLSTGDMGFAARKTYDIEVWLPGQGCYREISSCSVCGDFQGRRMNARYRKEGEKTLHFVHSLNGSGTAVGRCLIAVLENYQQADGSIIIPDVLQPYMRGMRCITA.

Residue 231 to 233 (TAE) coordinates L-serine. 262 to 264 (RSE) contacts ATP. L-serine is bound at residue E285. 349–352 (EISS) lines the ATP pocket. S385 lines the L-serine pocket.

It belongs to the class-II aminoacyl-tRNA synthetase family. Type-1 seryl-tRNA synthetase subfamily. In terms of assembly, homodimer. The tRNA molecule binds across the dimer.

The protein localises to the cytoplasm. The catalysed reaction is tRNA(Ser) + L-serine + ATP = L-seryl-tRNA(Ser) + AMP + diphosphate + H(+). The enzyme catalyses tRNA(Sec) + L-serine + ATP = L-seryl-tRNA(Sec) + AMP + diphosphate + H(+). Its pathway is aminoacyl-tRNA biosynthesis; selenocysteinyl-tRNA(Sec) biosynthesis; L-seryl-tRNA(Sec) from L-serine and tRNA(Sec): step 1/1. In terms of biological role, catalyzes the attachment of serine to tRNA(Ser). Is also able to aminoacylate tRNA(Sec) with serine, to form the misacylated tRNA L-seryl-tRNA(Sec), which will be further converted into selenocysteinyl-tRNA(Sec). The chain is Serine--tRNA ligase from Bartonella henselae (strain ATCC 49882 / DSM 28221 / CCUG 30454 / Houston 1) (Rochalimaea henselae).